The following is a 257-amino-acid chain: Acetylglutamate kinase (257 aa).

Substrate-binding positions include 41–42 (GG), R63, and N158.

Belongs to the acetylglutamate kinase family. ArgB subfamily.

The protein localises to the cytoplasm. The catalysed reaction is N-acetyl-L-glutamate + ATP = N-acetyl-L-glutamyl 5-phosphate + ADP. The protein operates within amino-acid biosynthesis; L-arginine biosynthesis; N(2)-acetyl-L-ornithine from L-glutamate: step 2/4. In terms of biological role, catalyzes the ATP-dependent phosphorylation of N-acetyl-L-glutamate. The polypeptide is Acetylglutamate kinase (Bacteroides thetaiotaomicron (strain ATCC 29148 / DSM 2079 / JCM 5827 / CCUG 10774 / NCTC 10582 / VPI-5482 / E50)).